A 256-amino-acid polypeptide reads, in one-letter code: uncharacterized protein (256 aa).

Disordered regions lie at residues 1-38 and 51-75; these read MGKTKDIGDDDTVASEFWSGALSQPSSVPTRPRTPNRD and PRPSILQPGPARLSRARAGGTRCPQ.

This is an uncharacterized protein from Homo sapiens (Human).